The sequence spans 206 residues: Small ribosomal subunit protein uS4 (206 aa).

One can recognise an S4 RNA-binding domain in the interval 96 to 156 (GRLDNVVYRM…EKAKKQSRVK (61 aa)).

This sequence belongs to the universal ribosomal protein uS4 family. In terms of assembly, part of the 30S ribosomal subunit. Contacts protein S5. The interaction surface between S4 and S5 is involved in control of translational fidelity.

In terms of biological role, one of the primary rRNA binding proteins, it binds directly to 16S rRNA where it nucleates assembly of the body of the 30S subunit. With S5 and S12 plays an important role in translational accuracy. This chain is Small ribosomal subunit protein uS4, found in Erwinia tasmaniensis (strain DSM 17950 / CFBP 7177 / CIP 109463 / NCPPB 4357 / Et1/99).